A 170-amino-acid polypeptide reads, in one-letter code: Protein SOB FIVE-LIKE 5 (170 aa).

Residues 10–15 carry the SOFL-A motif; the sequence is SGWTLY. Residues 17–78 are disordered; it reads DQSVSSPSPS…GPRNISEEDS (62 aa). Residues 35–44 are compositionally biased toward basic and acidic residues; sequence DSRRRSKDSW. The SOFL-B motif lies at 61-70; sequence SMISDASSGP. The Nuclear localization signal motif lies at 79–86; it reads VKKINIVG.

It belongs to the SOFL plant protein family. As to expression, expressed in seedlings, roots, flowers and siliques. Barely detectable in leaves.

The protein localises to the cytoplasm. It localises to the nucleus. Functionally, involved in cytokinin-mediated development. The protein is Protein SOB FIVE-LIKE 5 of Arabidopsis thaliana (Mouse-ear cress).